Reading from the N-terminus, the 69-residue chain is Beta-defensin 1 (69 aa).

The N-terminal stretch at 1 to 21 is a signal peptide; that stretch reads MKTHYFLLVMICFLFSQMEPG. The propeptide occupies 22 to 32; it reads VGILTSLGRRT. 3 disulfides stabilise this stretch: cysteine 37–cysteine 66, cysteine 44–cysteine 59, and cysteine 49–cysteine 67.

It belongs to the beta-defensin family. As to quaternary structure, monomer. Homodimer. Detected in kidney.

It localises to the secreted. It is found in the membrane. Has bactericidal activity. May act as a ligand for C-C chemokine receptor CCR6. Positively regulates the sperm motility and bactericidal activity in a CCR6-dependent manner. Binds to CCR6 and triggers Ca2+ mobilization in the sperm which is important for its motility. In Mus musculus (Mouse), this protein is Beta-defensin 1 (Defb1).